A 575-amino-acid polypeptide reads, in one-letter code: Alpha-(1,6)-fucosyltransferase (575 aa).

Topologically, residues 1-9 (MRAWTGSWR) are cytoplasmic. The helical; Signal-anchor for type II membrane protein transmembrane segment at 10–30 (WIMLILFAWGTLLFYIGGHLV) threads the bilayer. The Lumenal portion of the chain corresponds to 31–575 (RDNDHPDHSS…KYPTYPEAEK (545 aa)). 3 disulfide bridges follow: cysteine 204–cysteine 266, cysteine 212–cysteine 230, and cysteine 218–cysteine 222. In terms of domain architecture, GT23 spans 206–493 (KARKLVCNIN…PDASANFHSL (288 aa)). The residue at position 278 (serine 278) is a Phosphoserine. An SH3-binding motif is present at residues 299-305 (PRPPYLP). An important for donor substrate binding region spans residues 365–366 (RR). A disulfide bond links cysteine 465 and cysteine 472. The SH3 domain maps to 502-563 (QNAHNQIAVY…PSYKVREKIE (62 aa)).

This sequence belongs to the glycosyltransferase 23 family. In terms of processing, tyrosine phosphorylated by PKDCC/VLK.

The protein localises to the golgi apparatus. It is found in the golgi stack membrane. The enzyme catalyses N(4)-{beta-D-GlcNAc-(1-&gt;2)-alpha-D-Man-(1-&gt;3)-[beta-D-GlcNAc-(1-&gt;2)-alpha-D-Man-(1-&gt;6)]-beta-D-Man-(1-&gt;4)-beta-D-GlcNAc-(1-&gt;4)-beta-D-GlcNAc}-L-asparaginyl-[protein] + GDP-beta-L-fucose = an N(4)-{beta-D-GlcNAc-(1-&gt;2)-alpha-D-Man-(1-&gt;3)-[beta-D-GlcNAc-(1-&gt;2)-alpha-D-Man-(1-&gt;6)]-beta-D-Man-(1-&gt;4)-beta-D-GlcNAc-(1-&gt;4)-[alpha-L-Fuc-(1-&gt;6)]-beta-D-GlcNAc}-L-asparaginyl-[protein] + GDP + H(+). It functions in the pathway protein modification; protein glycosylation. Its function is as follows. Catalyzes the addition of fucose in alpha 1-6 linkage to the first GlcNAc residue, next to the peptide chains in N-glycans. This chain is Alpha-(1,6)-fucosyltransferase (Fut8), found in Rattus norvegicus (Rat).